Reading from the N-terminus, the 687-residue chain is Glycine--tRNA ligase beta subunit (687 aa).

Belongs to the class-II aminoacyl-tRNA synthetase family. In terms of assembly, tetramer of two alpha and two beta subunits.

It localises to the cytoplasm. It carries out the reaction tRNA(Gly) + glycine + ATP = glycyl-tRNA(Gly) + AMP + diphosphate. This chain is Glycine--tRNA ligase beta subunit, found in Neisseria meningitidis serogroup C (strain 053442).